The chain runs to 219 residues: Protein-methionine-sulfoxide reductase heme-binding subunit MsrQ (219 aa).

5 helical membrane passes run 17-37, 88-108, 121-141, 153-173, and 184-204; these read AKPLIFMVCLLPFAWLFYAAW, LFAYFYVVLHLLSYSWFDMGF, PFILVGFSAFVLLTPLAATSF, WQLLHKLVYLIAGLGLLHFFW, and VFVYAAIVALLLGWRVWNHWA.

This sequence belongs to the MsrQ family. In terms of assembly, heterodimer of a catalytic subunit (MsrP) and a heme-binding subunit (MsrQ). The cofactor is FMN. Requires heme b as cofactor.

The protein resides in the cell inner membrane. Functionally, part of the MsrPQ system that repairs oxidized periplasmic proteins containing methionine sulfoxide residues (Met-O), using respiratory chain electrons. Thus protects these proteins from oxidative-stress damage caused by reactive species of oxygen and chlorine generated by the host defense mechanisms. MsrPQ is essential for the maintenance of envelope integrity under bleach stress, rescuing a wide series of structurally unrelated periplasmic proteins from methionine oxidation. MsrQ provides electrons for reduction to the reductase catalytic subunit MsrP, using the quinone pool of the respiratory chain. This Polaromonas naphthalenivorans (strain CJ2) protein is Protein-methionine-sulfoxide reductase heme-binding subunit MsrQ.